Consider the following 249-residue polypeptide: 3-deoxy-D-manno-octulosonic acid kinase (249 aa).

Residue aspartate 175 is part of the active site.

It belongs to the protein kinase superfamily. KdkA/RfaP family.

It is found in the cell inner membrane. It catalyses the reaction an alpha-Kdo-(2-&gt;6)-lipid IVA + ATP = a 4-O-phospho-alpha-Kdo-(2-&gt;6)-lipid IVA + ADP + H(+). Its pathway is bacterial outer membrane biogenesis; LPS core biosynthesis. Functionally, catalyzes the ATP-dependent phosphorylation of the 3-deoxy-D-manno-octulosonic acid (Kdo) residue in Kdo-lipid IV(A) at the 4-OH position. The protein is 3-deoxy-D-manno-octulosonic acid kinase of Xanthomonas campestris pv. campestris (strain 8004).